Here is a 680-residue protein sequence, read N- to C-terminus: Probable Xaa-Pro aminopeptidase P (680 aa).

Positions 477, 488, 586, and 600 each coordinate Mn(2+).

Belongs to the peptidase M24B family. The cofactor is Mn(2+).

The catalysed reaction is Release of any N-terminal amino acid, including proline, that is linked to proline, even from a dipeptide or tripeptide.. In terms of biological role, catalyzes the removal of a penultimate prolyl residue from the N-termini of peptides. The chain is Probable Xaa-Pro aminopeptidase P (AMPP) from Podospora anserina (strain S / ATCC MYA-4624 / DSM 980 / FGSC 10383) (Pleurage anserina).